Reading from the N-terminus, the 277-residue chain is Zaragozic acid A biosynthesis cluster protein 1 (277 aa).

Its pathway is secondary metabolite biosynthesis. Its function is as follows. Part of the gene cluster that mediates the biosynthesis of squalestatin S1 (SQS1, also known as zaragozic acid A), a heavily oxidized fungal polyketide that offers potent cholesterol lowering activity by targeting squalene synthase (SS). SQS1 is composed of a 2,8-dioxobicyclic[3.2.1]octane-3,4,5-tricarboxyclic acid core that is connected to two lipophilic polyketide arms. These initial steps feature the priming of an unusual benzoic acid starter unit onto the highly reducing polyketide synthase clz14, followed by oxaloacetate extension and product release to generate a tricarboxylic acid containing product. The phenylalanine ammonia lyase (PAL) clz10 and the acyl-CoA ligase clz12 are involved in transforming phenylalanine into benzoyl-CoA. The citrate synthase-like protein clz17 is involved in connecting the C-alpha-carbons of the hexaketide chain and oxaloacetate to afford the tricarboxylic acid unit. The potential hydrolytic enzymes, clz11 and clz13, are in close proximity to pks2 and may participate in product release. On the other side, the tetraketide arm is synthesized by a the squalestatin tetraketide synthase clz2 and enzymatically esterified to the core in the last biosynthetic step, by the acetyltransferase clz6. The biosynthesis of the tetraketide must involve 3 rounds of chain extension. After the first and second rounds methyl-transfer occurs, and in all rounds of extension the ketoreductase and dehydratase are active. The enoyl reductase and C-MeT of clz2 are not active in the final round of extension. The acetyltransferase clz6 appears to have a broad substrate selectivity for its acyl CoA substrate, allowing the in vitro synthesis of novel squalestatins. The biosynthesis of SQS1 requires several oxidative steps likely performed by oxidoreductases clz3, clz15 and clz16. Finally, in support of the identification of the cluster as being responsible for SQS1 production, the cluster contains a gene encoding a putative squalene synthase (SS) clz20, suggesting a likely mechanism for self-resistance. The chain is Zaragozic acid A biosynthesis cluster protein 1 from Cochliobolus lunatus (Filamentous fungus).